A 321-amino-acid chain; its full sequence is Solute carrier family 25 member 33 (321 aa).

Solcar repeat units lie at residues 9–118 (ENTL…AKEQ), 126–213 (NSNI…LKKY), and 231–315 (TSFF…IVYL). A run of 6 helical transmembrane segments spans residues 12–32 (LLHLFAGGCGGTVGAIFTCPL), 49–65 (VYYPQVHLGTISGAGMV), 121–141 (GIFVPNSNIVHIFSAGSAAFI), 190–210 (LTASYAGISETIICFAIYESL), 233–253 (FFGLMAAAALSKGCASCIAYP), and 298–318 (QIPNTAIVLSTYELIVYLLED).

Belongs to the mitochondrial carrier (TC 2.A.29) family. Expressed in the central nervous system. Also expressed in testis and skeletal muscle. Weakly expressed in heart, liver, kidney, prostate, colon and peripheral blood leukocytes.

Its subcellular location is the mitochondrion inner membrane. It catalyses the reaction UTP(in) + UDP(out) = UTP(out) + UDP(in). The enzyme catalyses dUTP(out) + UTP(in) = dUTP(in) + UTP(out). The catalysed reaction is 5-methyl-UTP(out) + UTP(in) = 5-methyl-UTP(in) + UTP(out). It carries out the reaction 5-methyl-UDP(out) + UTP(in) = 5-methyl-UDP(in) + UTP(out). It catalyses the reaction UTP(in) + CTP(out) = UTP(out) + CTP(in). The enzyme catalyses CDP(out) + UTP(in) = CDP(in) + UTP(out). The catalysed reaction is dCTP(out) + UTP(in) = dCTP(in) + UTP(out). It carries out the reaction dCDP(out) + UTP(in) = dCDP(in) + UTP(out). It catalyses the reaction UTP(in) + GTP(out) = UTP(out) + GTP(in). The enzyme catalyses UTP(in) + GDP(out) = UTP(out) + GDP(in). The catalysed reaction is dGTP(out) + UTP(in) = dGTP(in) + UTP(out). It carries out the reaction dGDP(out) + UTP(in) = dGDP(in) + UTP(out). It catalyses the reaction ITP(out) + UTP(in) = ITP(in) + UTP(out). With respect to regulation, inhibited by pyridoxal 5'-phosphate, 4,7-diphenyl-1,10-phenanthroline, tannic acid, and mercurials (mercury dichloride, mersalyl acid, p-hydroxymercuribenzoate). In terms of biological role, mitochondrial transporter that imports/exports pyrimidine nucleotides into and from mitochondria. Selectively transports uridine, thymidine, guanosine, cytosine and inosine (deoxy)nucleoside di- and triphosphates by an antiport mechanism. May import (deoxy)nucleoside triphosphates in exchange for intramitochondrial (deoxy)nucleoside diphosphates, thus providing precursors necessary for de novo synthesis of mitochondrial DNA and RNA while exporting products of their catabolism. Participates in mitochondrial genome maintenance, regulation of mitochondrial membrane potential and mitochondrial respiration. Upon INS or IGF1 stimulation regulates cell growth and proliferation by controlling mitochondrial DNA replication and transcription, the ratio of mitochondria-to nuclear-encoded components of the electron transport chain resulting in control of mitochondrial ROS production. Participates in dendritic cell endocytosis and may associate with mitochondrial oxidative phosphorylation. In Homo sapiens (Human), this protein is Solute carrier family 25 member 33 (SLC25A33).